We begin with the raw amino-acid sequence, 623 residues long: Xaa-Pro aminopeptidase 1 (623 aa).

Arginine 77 contributes to the a peptide binding site. N6-acetyllysine is present on lysine 304. Histidine 395 provides a ligand contact to a peptide. Mn(2+)-binding residues include aspartate 415, aspartate 426, and histidine 489. The a peptide site is built by histidine 489, histidine 498, and glutamate 523. Positions 523 and 537 each coordinate Mn(2+).

Belongs to the peptidase M24B family. Homodimer. Requires Mn(2+) as cofactor.

It is found in the cytoplasm. The protein resides in the cytosol. The enzyme catalyses Release of any N-terminal amino acid, including proline, that is linked to proline, even from a dipeptide or tripeptide.. Functionally, metalloaminopeptidase that catalyzes the removal of a penultimate prolyl residue from the N-termini of peptides, such as Arg-Pro-Pro. Contributes to the degradation of bradykinin. The polypeptide is Xaa-Pro aminopeptidase 1 (Mus musculus (Mouse)).